The chain runs to 319 residues: G-protein coupled receptor 171 (319 aa).

Residues 1-21 (MTNSSFFCPVYKDLEPFTYFF) lie on the Extracellular side of the membrane. Asparagine 3 carries N-linked (GlcNAc...) asparagine glycosylation. The chain crosses the membrane as a helical span at residues 22–42 (YLVFLVGIIGSCFATWAFIQK). Over 43 to 48 (NTNHRC) the chain is Cytoplasmic. A helical membrane pass occupies residues 49-69 (VSIYLINLLTADFLLTLALPV). Residues 70 to 89 (KIVVDLGVAPWKLKIFHCQV) are Extracellular-facing. A helical transmembrane segment spans residues 90–110 (TACLIYINMYLSIIFLAFVSI). Residues 111–132 (DRCLQLTHSCKIYRIQEPGFAK) lie on the Cytoplasmic side of the membrane. Residues 133–153 (MISTVVWLMVLLIMVPNMMIP) traverse the membrane as a helical segment. The Extracellular portion of the chain corresponds to 154-181 (IKDIKEKSNVGCMEFKKEFGRNWHLLTN). The chain crosses the membrane as a helical span at residues 182 to 202 (FICVAIFLNFSAIILISNCLV). The Cytoplasmic segment spans residues 203–224 (IRQLYRNKDNENYPNVKKALIN). The helical transmembrane segment at 225–245 (ILLVTTGYIICFVPYHIVRIP) threads the bilayer. The Extracellular portion of the chain corresponds to 246 to 268 (YTLSQTEVITDCSTRISLFKAKE). The chain crosses the membrane as a helical span at residues 269-289 (ATLLLAVSNLCFDPILYYHLS). Topologically, residues 290 to 319 (KAFRSKVTETFASPKETKAQKEKLRCENNA) are cytoplasmic.

It belongs to the G-protein coupled receptor 1 family. As to expression, expressed in both T-cell subsets and natural killer cells, while it is undetectable in B cells or CD14(+) monocytes. Expressed in peripheral blood mononuclear cells (PBMC) and Jurkat cells (at protein level).

It localises to the cell membrane. Functionally, G-protein coupled receptor for Big LEN, a 16-amino acid neuropeptide produced from the precursor protein, proSAAS (encoded by PCSK1N). Acts through a G(i)-alpha-mediated pathway in response to Big LEN. Big LEN-GPR171 system plays an important role in regulating feeding and metabolism. Also plays a role in modulating fear and anxiety-like behaviors in the basolateral amygdala. Big LEN-GPR171 modulates the mu-type opioid receptor signaling and antinociception. Acts as a negative regulator T cell function. The chain is G-protein coupled receptor 171 from Homo sapiens (Human).